Here is a 429-residue protein sequence, read N- to C-terminus: Ribosomal RNA small subunit methyltransferase B (429 aa).

Residues 254-260 (CAAPGGK), Asp277, Asp303, and Asp322 contribute to the S-adenosyl-L-methionine site. The active-site Nucleophile is the Cys375.

Belongs to the class I-like SAM-binding methyltransferase superfamily. RsmB/NOP family.

The protein resides in the cytoplasm. It catalyses the reaction cytidine(967) in 16S rRNA + S-adenosyl-L-methionine = 5-methylcytidine(967) in 16S rRNA + S-adenosyl-L-homocysteine + H(+). Functionally, specifically methylates the cytosine at position 967 (m5C967) of 16S rRNA. The protein is Ribosomal RNA small subunit methyltransferase B of Shigella sonnei (strain Ss046).